The following is a 377-amino-acid chain: Gap junction gamma-1 protein (377 aa).

Residues 1–18 (MSWSFLTRLLEEINNHST) lie on the Cytoplasmic side of the membrane. A helical membrane pass occupies residues 19 to 39 (FVGKVWLTVLIIFRIVLTAVG). Topologically, residues 40-75 (GESIYYDEQSKFTCNTQQPGCENVCYDAFAPLSHVR) are extracellular. The chain crosses the membrane as a helical span at residues 76–96 (FWVFQIILITTPSIMYLGFAM). Over 97-174 (HRIARQPEMQ…RRIKQDGLMK (78 aa)) the chain is Cytoplasmic. Residues 129 to 163 (DYEEAEDNQEEDPMICEEEEPEKDSEKGDKKKHDG) form a disordered region. Positions 131–151 (EEAEDNQEEDPMICEEEEPEK) are enriched in acidic residues. The chain crosses the membrane as a helical span at residues 175-197 (VYVLQLLFRSVFEVGFLMGQYIL). At 198 to 228 (YGFEVIPFFVCSRKPCPHTVDCFVSRPTEKT) the chain is on the extracellular side. Residues 229-249 (IFLLIMYAVSALCLFLNLCEL) form a helical membrane-spanning segment. Over 250 to 377 (FHLGIGGIRD…GVGNREKSGL (128 aa)) the chain is Cytoplasmic. Disordered stretches follow at residues 265-294 (KKEL…LPNG) and 334-377 (LNPT…KSGL). The span at 337–362 (TGDNTHASRSSSPESNSIAAEQNRLN) shows a compositional bias: polar residues.

This sequence belongs to the connexin family. Gamma-type subfamily. A connexon is composed of a hexamer of connexins.

Its subcellular location is the cell membrane. It is found in the cell junction. It localises to the gap junction. One gap junction consists of a cluster of closely packed pairs of transmembrane channels, the connexons, through which materials of low MW diffuse from one cell to a neighboring cell. The chain is Gap junction gamma-1 protein (gjc1) from Xenopus tropicalis (Western clawed frog).